The following is a 106-amino-acid chain: Insulin-like peptide 04 (106 aa).

A signal peptide spans 1–22 (MPRTFLVVLIYILAGFLCSTSA). Residues 23-37 (LRKVNEASGIKTDGS) constitute a propeptide that is removed on maturation. 3 disulfides stabilise this stretch: Cys-45/Cys-50, Cys-46/Cys-80, and Cys-59/Cys-68. The propeptide at 86 to 106 (RRKRSLTVDKREAKKFIRQRR) is c peptide.

This sequence belongs to the insulin family.

The protein localises to the secreted. Functionally, insulin decreases blood glucose concentration. May have evolved to activate insulin receptors (INSR) in vertebrates. Molecular docking studies reveals unique interaction with the human insulin receptor. In vivo, insulin-like peptide injection reduces blood glucose levels in two models of zebrafish diabetes (streptozotocin- and glucose-induced). Also shorter swimming distance of zebrafish larvae, an effect which is not observed with human insulin. The protein is Insulin-like peptide 04 of Exaiptasia diaphana (Tropical sea anemone).